Reading from the N-terminus, the 426-residue chain is Serine--tRNA ligase (426 aa).

Residue 233–235 (TAE) coordinates L-serine. 264 to 266 (RSE) serves as a coordination point for ATP. L-serine is bound at residue Glu-287. 351–354 (EISS) is an ATP binding site. Ser-387 contacts L-serine.

This sequence belongs to the class-II aminoacyl-tRNA synthetase family. Type-1 seryl-tRNA synthetase subfamily. As to quaternary structure, homodimer. The tRNA molecule binds across the dimer.

Its subcellular location is the cytoplasm. It catalyses the reaction tRNA(Ser) + L-serine + ATP = L-seryl-tRNA(Ser) + AMP + diphosphate + H(+). The catalysed reaction is tRNA(Sec) + L-serine + ATP = L-seryl-tRNA(Sec) + AMP + diphosphate + H(+). It participates in aminoacyl-tRNA biosynthesis; selenocysteinyl-tRNA(Sec) biosynthesis; L-seryl-tRNA(Sec) from L-serine and tRNA(Sec): step 1/1. Catalyzes the attachment of serine to tRNA(Ser). Is also able to aminoacylate tRNA(Sec) with serine, to form the misacylated tRNA L-seryl-tRNA(Sec), which will be further converted into selenocysteinyl-tRNA(Sec). This Azotobacter vinelandii (strain DJ / ATCC BAA-1303) protein is Serine--tRNA ligase.